The primary structure comprises 994 residues: Glycine dehydrogenase (decarboxylating) (994 aa).

The disordered stretch occupies residues 1 to 20 (MTDHAENRCGLEGPRPFSSR). K716 is modified (N6-(pyridoxal phosphate)lysine).

The protein belongs to the GcvP family. In terms of assembly, the glycine cleavage system is composed of four proteins: P, T, L and H. Pyridoxal 5'-phosphate serves as cofactor.

It catalyses the reaction N(6)-[(R)-lipoyl]-L-lysyl-[glycine-cleavage complex H protein] + glycine + H(+) = N(6)-[(R)-S(8)-aminomethyldihydrolipoyl]-L-lysyl-[glycine-cleavage complex H protein] + CO2. In terms of biological role, the glycine cleavage system catalyzes the degradation of glycine. The P protein binds the alpha-amino group of glycine through its pyridoxal phosphate cofactor; CO(2) is released and the remaining methylamine moiety is then transferred to the lipoamide cofactor of the H protein. In Cutibacterium acnes (strain DSM 16379 / KPA171202) (Propionibacterium acnes), this protein is Glycine dehydrogenase (decarboxylating).